An 804-amino-acid chain; its full sequence is DNA gyrase subunit B (804 aa).

The 116-residue stretch at 431 to 546 (CEMYIVEGDS…NGCVYIAQPP (116 aa)) folds into the Toprim domain. The Mg(2+) site is built by E437, D511, and D513.

The protein belongs to the type II topoisomerase GyrB family. Heterotetramer, composed of two GyrA and two GyrB chains. In the heterotetramer, GyrA contains the active site tyrosine that forms a transient covalent intermediate with DNA, while GyrB binds cofactors and catalyzes ATP hydrolysis. Requires Mg(2+) as cofactor. It depends on Mn(2+) as a cofactor. Ca(2+) is required as a cofactor.

The protein localises to the cytoplasm. It catalyses the reaction ATP-dependent breakage, passage and rejoining of double-stranded DNA.. Its function is as follows. A type II topoisomerase that negatively supercoils closed circular double-stranded (ds) DNA in an ATP-dependent manner to modulate DNA topology and maintain chromosomes in an underwound state. Negative supercoiling favors strand separation, and DNA replication, transcription, recombination and repair, all of which involve strand separation. Also able to catalyze the interconversion of other topological isomers of dsDNA rings, including catenanes and knotted rings. Type II topoisomerases break and join 2 DNA strands simultaneously in an ATP-dependent manner. In Chlamydia muridarum (strain MoPn / Nigg), this protein is DNA gyrase subunit B.